The sequence spans 144 residues: MIELDAINPNNLKILEVINEKCFDPEIIIFPTSFYKDTISVGPLAQYAYFNQVCVGAVRCKKETHNKSHKIQILSLAVLPAYRNRSIGTKLLEYACETAAEGKAKEIYIKLSPKLDVSEWFIHRGFIIDESSKTEDSVLLSKKL.

The N-acetyltransferase domain maps to 2–144 (IELDAINPNN…EDSVLLSKKL (143 aa)).

The protein belongs to the acetyltransferase family.

It is found in the cytoplasm. It localises to the nucleus. This is an uncharacterized protein from Schizosaccharomyces pombe (strain 972 / ATCC 24843) (Fission yeast).